We begin with the raw amino-acid sequence, 292 residues long: Elongation factor Ts (292 aa).

Residues 82–85 (TDFV) form an involved in Mg(2+) ion dislocation from EF-Tu region.

The protein belongs to the EF-Ts family.

The protein localises to the cytoplasm. In terms of biological role, associates with the EF-Tu.GDP complex and induces the exchange of GDP to GTP. It remains bound to the aminoacyl-tRNA.EF-Tu.GTP complex up to the GTP hydrolysis stage on the ribosome. The protein is Elongation factor Ts of Legionella pneumophila (strain Paris).